Consider the following 87-residue polypeptide: MKPNIHPEYRTVVFHDTSIDEYFKIGSTIKTDREIELDGVTYPYVTIDVSSKSHPFYTGKLRTVASEGNVARFTQRFGRFVSTKKGA.

Belongs to the bacterial ribosomal protein bL31 family. Type B subfamily. As to quaternary structure, part of the 50S ribosomal subunit.

The sequence is that of Large ribosomal subunit protein bL31B from Escherichia coli O9:H4 (strain HS).